We begin with the raw amino-acid sequence, 180 residues long: Protein GrpE (180 aa).

The disordered stretch occupies residues 1-21 (MSEEVKEQNLPEVEPVQEAAS).

The protein belongs to the GrpE family. As to quaternary structure, homodimer.

It localises to the cytoplasm. In terms of biological role, participates actively in the response to hyperosmotic and heat shock by preventing the aggregation of stress-denatured proteins, in association with DnaK and GrpE. It is the nucleotide exchange factor for DnaK and may function as a thermosensor. Unfolded proteins bind initially to DnaJ; upon interaction with the DnaJ-bound protein, DnaK hydrolyzes its bound ATP, resulting in the formation of a stable complex. GrpE releases ADP from DnaK; ATP binding to DnaK triggers the release of the substrate protein, thus completing the reaction cycle. Several rounds of ATP-dependent interactions between DnaJ, DnaK and GrpE are required for fully efficient folding. This Campylobacter concisus (strain 13826) protein is Protein GrpE.